Reading from the N-terminus, the 87-residue chain is Probable acyl carrier protein PigG (87 aa).

Residues Met-1 to Lys-78 form the Carrier domain. The residue at position 36 (Ser-36) is an O-(pantetheine 4'-phosphoryl)serine.

Its pathway is antibiotic biosynthesis; prodigiosin biosynthesis. Functionally, involved in the biosynthesis of 4-methoxy-2,2'-bipyrrole-5-carbaldehyde (MBC), one of the terminal products involved in the biosynthesis of the red antibiotic prodigiosin (Pig). Carrier of the L-prolyl group transferred from L-prolyl-AMP by PigI. The chain is Probable acyl carrier protein PigG from Serratia sp. (strain ATCC 39006) (Prodigiosinella confusarubida).